Reading from the N-terminus, the 28-residue chain is Cruzioseptin-3 (28 aa).

At Gln-25 the chain carries Glutamine amide. Residues 27–28 (EQ) constitute a propeptide that is removed on maturation.

In terms of tissue distribution, expressed by the skin glands.

It is found in the secreted. Functionally, has antimicrobial activity against Gram-negative bacterium E.coli (MIC=13.32 uM), against Gram-positive bacterium S.aureus (MIC=13.32 uM) and against fungus C.albicans (MIC=13.32 uM). At higher concentrations also has a bactericidal and fungicidal effect. Has hemagglutinating activity against horse erythrocytes. This is Cruzioseptin-3 from Cruziohyla calcarifer (Splendid leaf frog).